Consider the following 161-residue polypeptide: Endoribonuclease YbeY (161 aa).

The Zn(2+) site is built by His-127, His-131, and His-137.

It belongs to the endoribonuclease YbeY family. The cofactor is Zn(2+).

It is found in the cytoplasm. Its function is as follows. Single strand-specific metallo-endoribonuclease involved in late-stage 70S ribosome quality control and in maturation of the 3' terminus of the 16S rRNA. The protein is Endoribonuclease YbeY of Listeria monocytogenes serotype 4a (strain HCC23).